A 190-amino-acid polypeptide reads, in one-letter code: Xanthine phosphoribosyltransferase (190 aa).

2 residues coordinate xanthine: L20 and N27. 128 to 132 (ANGKA) contacts 5-phospho-alpha-D-ribose 1-diphosphate. A xanthine-binding site is contributed by K156.

Belongs to the purine/pyrimidine phosphoribosyltransferase family. Xpt subfamily. Homodimer.

It localises to the cytoplasm. The enzyme catalyses XMP + diphosphate = xanthine + 5-phospho-alpha-D-ribose 1-diphosphate. Its pathway is purine metabolism; XMP biosynthesis via salvage pathway; XMP from xanthine: step 1/1. In terms of biological role, converts the preformed base xanthine, a product of nucleic acid breakdown, to xanthosine 5'-monophosphate (XMP), so it can be reused for RNA or DNA synthesis. The protein is Xanthine phosphoribosyltransferase of Pseudomonas fluorescens (strain Pf0-1).